Reading from the N-terminus, the 289-residue chain is Rhodopsin (289 aa).

The Extracellular segment spans residues 1–7 (YLVNPAG). Residues 8–32 (YAALGAYMFLLILIGSPVNFLTLYV) traverse the membrane as a helical segment. Residues 33-44 (TLEHKKLRTPLN) lie on the Cytoplasmic side of the membrane. Residues 45 to 67 (YILLNLAVADLFMVLGGFTTTMY) traverse the membrane as a helical segment. The Extracellular segment spans residues 68-81 (TSMHGYSVLGRLGC). An intrachain disulfide couples Cys-81 to Cys-158. The helical transmembrane segment at 82–104 (ILEGFFATLGGEIALWSLVVLAI) threads the bilayer. The short motif at 105 to 107 (ERW) is the 'Ionic lock' involved in activated form stabilization element. The Cytoplasmic segment spans residues 105 to 123 (ERWIVVCKPISNFRFTEDH). Residues 124-144 (AIMGLAFSWVMALACAVPPLV) form a helical membrane-spanning segment. The Extracellular segment spans residues 145–173 (GWSRYIPEGMQCSCGVDYYTRAEGFNNES). A glycan (N-linked (GlcNAc...) asparagine) is linked at Asn-171. Residues 174-195 (FVIYMFIVHFLIPLSVIFFCYG) form a helical membrane-spanning segment. Topologically, residues 196–223 (RLLCAVKEAAAAQQESETTQRPEKEVTR) are cytoplasmic. Residues 224–245 (MVVIMVIAFLVCCLPNASVAWW) traverse the membrane as a helical segment. At 246-257 (IFCNQGSDFGPI) the chain is on the extracellular side. A helical transmembrane segment spans residues 258 to 279 (FMTLPSFFAKSAAIYNPMIYIC). Lys-267 bears the N6-(retinylidene)lysine mark. Residues 280-289 (MNKQFRHCMI) are Cytoplasmic-facing.

The protein belongs to the G-protein coupled receptor 1 family. Opsin subfamily. Post-translationally, phosphorylated on some or all of the serine and threonine residues present in the C-terminal region. Contains one covalently linked retinal chromophore.

It is found in the membrane. It localises to the cell projection. The protein resides in the cilium. The protein localises to the photoreceptor outer segment. Functionally, photoreceptor required for image-forming vision at low light intensity. While most salt water fish species use retinal as chromophore, most freshwater fish use 3-dehydroretinal, or a mixture of retinal and 3-dehydroretinal. Light-induced isomerization of 11-cis to all-trans retinal triggers a conformational change that activates signaling via G-proteins. Subsequent receptor phosphorylation mediates displacement of the bound G-protein alpha subunit by arrestin and terminates signaling. This chain is Rhodopsin (rho), found in Limnocottus bergianus.